The sequence spans 87 residues: Small ribosomal subunit protein bS20 (87 aa).

Residues 1–26 (MANHKSAIKRHKQSQKRAARNRAAKT) form a disordered region.

Belongs to the bacterial ribosomal protein bS20 family.

In terms of biological role, binds directly to 16S ribosomal RNA. The polypeptide is Small ribosomal subunit protein bS20 (Nitratidesulfovibrio vulgaris (strain DSM 19637 / Miyazaki F) (Desulfovibrio vulgaris)).